A 427-amino-acid chain; its full sequence is MNRNEILFDRAKAIIPGGVNSPVRAFGSVGGVPRFIKKAEGAYVWDENGTRYTDYVGSWGPAIVGHAHPEVVEAVREAALGGLSFGAPTEGEIAIAEQIAKIMPSVERLRLVSSGTEATMTAIRLARGFTGRDKIIKFEGCYHGHSDSLLVKAGSGLLTFGNPSSAGVPADFTKHTLVLEYNNIAQLEEAFAQSGNDIACVILEPFVGNMNLVRPTEAFVKALRELTEKHGAVLIYDEVMTGFRVALGGAQSLHGIMPDLTTMGKVIGGGMPLAAFGGRKDIMECISPLGGVYQAGTLSGNPIAVAAGLKTLEIIRREGFYENLTARTEQLVQGFRTAADAAGIEFTADSVGGMFGLYFAAHAPRNYADMARSNIDAFKRFFHGMLDRGIAFGPSAYEAGFVSAAHTPELIDETVAVAVEVFKAMAA.

N6-(pyridoxal phosphate)lysine is present on K265.

The protein belongs to the class-III pyridoxal-phosphate-dependent aminotransferase family. HemL subfamily. Homodimer. Pyridoxal 5'-phosphate serves as cofactor.

The protein localises to the cytoplasm. It catalyses the reaction (S)-4-amino-5-oxopentanoate = 5-aminolevulinate. Its pathway is porphyrin-containing compound metabolism; protoporphyrin-IX biosynthesis; 5-aminolevulinate from L-glutamyl-tRNA(Glu): step 2/2. This chain is Glutamate-1-semialdehyde 2,1-aminomutase, found in Neisseria meningitidis serogroup C (strain 053442).